A 352-amino-acid chain; its full sequence is Protein RecA (352 aa).

Residue 65-72 (GPESSGKT) participates in ATP binding. Residues 333-352 (VKAAANREPVEEVEEADTDI) form a disordered region. The span at 343 to 352 (EEVEEADTDI) shows a compositional bias: acidic residues.

Belongs to the RecA family.

The protein localises to the cytoplasm. Can catalyze the hydrolysis of ATP in the presence of single-stranded DNA, the ATP-dependent uptake of single-stranded DNA by duplex DNA, and the ATP-dependent hybridization of homologous single-stranded DNAs. It interacts with LexA causing its activation and leading to its autocatalytic cleavage. The chain is Protein RecA from Pseudomonas fluorescens.